The primary structure comprises 606 residues: Phosphomethylpyrimidine synthase (606 aa).

A compositionally biased stretch (polar residues) spans 1–13; sequence MTTADARTPASKQ. Disordered stretches follow at residues 1–49 and 105–147; these read MTTA…SRPD and AGRP…DGRP. The segment covering 14-31 has biased composition (low complexity); the sequence is NDGTPDGTTPDAGTPNDG. Residues 105–117 show a composition bias toward basic and acidic residues; the sequence is AGRPVRPEDDGLK. Substrate contacts are provided by residues Asn213, Met242, Tyr271, His307, 327–329, 368–371, and Glu407; these read SRG and DGLR. His411 contacts Zn(2+). Tyr434 lines the substrate pocket. His475 contributes to the Zn(2+) binding site. Positions 555, 558, and 563 each coordinate [4Fe-4S] cluster.

It belongs to the ThiC family. [4Fe-4S] cluster serves as cofactor.

The enzyme catalyses 5-amino-1-(5-phospho-beta-D-ribosyl)imidazole + S-adenosyl-L-methionine = 4-amino-2-methyl-5-(phosphooxymethyl)pyrimidine + CO + 5'-deoxyadenosine + formate + L-methionine + 3 H(+). The protein operates within cofactor biosynthesis; thiamine diphosphate biosynthesis. Functionally, catalyzes the synthesis of the hydroxymethylpyrimidine phosphate (HMP-P) moiety of thiamine from aminoimidazole ribotide (AIR) in a radical S-adenosyl-L-methionine (SAM)-dependent reaction. This is Phosphomethylpyrimidine synthase from Streptomyces griseus subsp. griseus (strain JCM 4626 / CBS 651.72 / NBRC 13350 / KCC S-0626 / ISP 5235).